The following is a 351-amino-acid chain: Cell shape-determining protein MreB (351 aa).

ATP contacts are provided by residues 20–22 (TAN), 169–171 (GGT), 217–220 (ERIK), and 299–302 (GGAL).

Belongs to the FtsA/MreB family. Forms polymers.

It localises to the cytoplasm. Functionally, forms membrane-associated dynamic filaments that are essential for cell shape determination. Acts by regulating cell wall synthesis and cell elongation, and thus cell shape. A feedback loop between cell geometry and MreB localization may maintain elongated cell shape by targeting cell wall growth to regions of negative cell wall curvature. The chain is Cell shape-determining protein MreB from Pasteurella multocida (strain Pm70).